The chain runs to 79 residues: Acyl carrier protein (79 aa).

Residues 3–78 enclose the Carrier domain; that stretch reads QEILEKVCSI…DAVKFIEEKK (76 aa). O-(pantetheine 4'-phosphoryl)serine is present on serine 38.

This sequence belongs to the acyl carrier protein (ACP) family. In terms of processing, 4'-phosphopantetheine is transferred from CoA to a specific serine of apo-ACP by AcpS. This modification is essential for activity because fatty acids are bound in thioester linkage to the sulfhydryl of the prosthetic group.

It localises to the cytoplasm. Its pathway is lipid metabolism; fatty acid biosynthesis. Carrier of the growing fatty acid chain in fatty acid biosynthesis. The polypeptide is Acyl carrier protein (Prochlorococcus marinus (strain MIT 9312)).